Here is a 117-residue protein sequence, read N- to C-terminus: Large ribosomal subunit protein bL20 (117 aa).

This sequence belongs to the bacterial ribosomal protein bL20 family.

Binds directly to 23S ribosomal RNA and is necessary for the in vitro assembly process of the 50S ribosomal subunit. It is not involved in the protein synthesizing functions of that subunit. The sequence is that of Large ribosomal subunit protein bL20 from Marinobacter nauticus (strain ATCC 700491 / DSM 11845 / VT8) (Marinobacter aquaeolei).